Reading from the N-terminus, the 435-residue chain is Islet cell autoantigen 1-like protein (435 aa).

The AH domain maps to 44–247 (ASDAELDAKL…TAQMMSQIQE (204 aa)). The disordered stretch occupies residues 391–435 (WASQEGSEHSDTLPVPSQHPKKLKYLGPLSNPDAIGHSDDELLNA). Over residues 426 to 435 (GHSDDELLNA) the composition is skewed to basic and acidic residues.

The chain is Islet cell autoantigen 1-like protein (Ica1l) from Rattus norvegicus (Rat).